The chain runs to 119 residues: Small ribosomal subunit protein uS10 (119 aa).

A2 is subject to N-acetylalanine. K4 participates in a covalent cross-link: Glycyl lysine isopeptide (Lys-Gly) (interchain with G-Cter in ubiquitin). K8 carries the N6-succinyllysine; alternate modification. K8 is covalently cross-linked (Glycyl lysine isopeptide (Lys-Gly) (interchain with G-Cter in ubiquitin); alternate). T9 bears the Phosphothreonine mark. An N6-acetyllysine mark is found at K34 and K75. S93 is subject to Phosphoserine.

This sequence belongs to the universal ribosomal protein uS10 family. Component of the 40S small ribosomal subunit. Polyubiquitinated by ZNF598 via 'Lys-63'-linked ubiquitin chains when a ribosome has stalled, initiating the ribosome quality control (RQC) pathway to degrade the potentially detrimental aberrant nascent polypeptide. Deubiquitinated by OTUD3 and USP21, antagonizing ZNF598 activity. Post-translationally, ufmylated by UFL1.

It is found in the cytoplasm. Functionally, component of the small ribosomal subunit. The ribosome is a large ribonucleoprotein complex responsible for the synthesis of proteins in the cell. This Sus scrofa (Pig) protein is Small ribosomal subunit protein uS10 (RPS20).